The chain runs to 601 residues: Elongation factor 4 (601 aa).

The tr-type G domain occupies 7–189 (SNIRNFSIVA…AIVHRLPPPQ (183 aa)). Residues 19–24 (DHGKST) and 136–139 (NKVD) each bind GTP.

It belongs to the TRAFAC class translation factor GTPase superfamily. Classic translation factor GTPase family. LepA subfamily.

The protein resides in the cell inner membrane. The enzyme catalyses GTP + H2O = GDP + phosphate + H(+). In terms of biological role, required for accurate and efficient protein synthesis under certain stress conditions. May act as a fidelity factor of the translation reaction, by catalyzing a one-codon backward translocation of tRNAs on improperly translocated ribosomes. Back-translocation proceeds from a post-translocation (POST) complex to a pre-translocation (PRE) complex, thus giving elongation factor G a second chance to translocate the tRNAs correctly. Binds to ribosomes in a GTP-dependent manner. In Rhodopseudomonas palustris (strain BisB18), this protein is Elongation factor 4.